Here is a 513-residue protein sequence, read N- to C-terminus: ATP synthase subunit alpha (513 aa).

169 to 176 (GDRQCGKT) contacts ATP.

This sequence belongs to the ATPase alpha/beta chains family. As to quaternary structure, F-type ATPases have 2 components, CF(1) - the catalytic core - and CF(0) - the membrane proton channel. CF(1) has five subunits: alpha(3), beta(3), gamma(1), delta(1), epsilon(1). CF(0) has three main subunits: a(1), b(2) and c(9-12). The alpha and beta chains form an alternating ring which encloses part of the gamma chain. CF(1) is attached to CF(0) by a central stalk formed by the gamma and epsilon chains, while a peripheral stalk is formed by the delta and b chains.

It localises to the cell inner membrane. It catalyses the reaction ATP + H2O + 4 H(+)(in) = ADP + phosphate + 5 H(+)(out). Produces ATP from ADP in the presence of a proton gradient across the membrane. The alpha chain is a regulatory subunit. This Burkholderia ambifaria (strain MC40-6) protein is ATP synthase subunit alpha.